Here is a 215-residue protein sequence, read N- to C-terminus: 3,4-dihydroxy-2-butanone 4-phosphate synthase (215 aa).

Residues 37 to 38 (RE), aspartate 42, 150 to 154 (RRGHT), and glutamate 175 each bind D-ribulose 5-phosphate. Glutamate 38 contacts Mg(2+). Histidine 153 is a binding site for Mg(2+).

It belongs to the DHBP synthase family. In terms of assembly, homodimer. Mg(2+) serves as cofactor. Requires Mn(2+) as cofactor.

It catalyses the reaction D-ribulose 5-phosphate = (2S)-2-hydroxy-3-oxobutyl phosphate + formate + H(+). The protein operates within cofactor biosynthesis; riboflavin biosynthesis; 2-hydroxy-3-oxobutyl phosphate from D-ribulose 5-phosphate: step 1/1. In terms of biological role, catalyzes the conversion of D-ribulose 5-phosphate to formate and 3,4-dihydroxy-2-butanone 4-phosphate. This is 3,4-dihydroxy-2-butanone 4-phosphate synthase from Desulfatibacillum aliphaticivorans.